Here is a 419-residue protein sequence, read N- to C-terminus: MRKIIINGGKQLTGEVAVSGAKNSVVALIPATILADDVVVLDGVPAISDVDSLVDIMETMGAKIKRYGETLEIDPCGVKDIPMPYGKINSLRASYYFYGSLLGRYGQATLGLPGGCDLGPRPIDLHLKAFEAMGASVSYEGDSMRLATNGKPLQGANIYMDTVSVGATINTIIAAAKANGRTVIENAAREPEIIDVATLLNNMGAHIRGAGTDVITIEGVKSLHGTRHQVIPDRIEAGTYIAMAAAIGRGIKVTNVLYEHLESFIAKLDEMGVRMTVEEDSIFVEEQERLKAVSIKTSPYPGFATDLQQPLTPLLLTAEGNGSLLDTIYEKRVNHVPELARMGANISTLGGKIVYSGPNQLSGAPVKATDLRAGAALVIAGLMAEGRTEITNIEFILRGYSNIIEKLTSLGADIQLVEE.

22-23 (KN) is a phosphoenolpyruvate binding site. Arg92 serves as a coordination point for UDP-N-acetyl-alpha-D-glucosamine. Cys116 (proton donor) is an active-site residue. 2-(S-cysteinyl)pyruvic acid O-phosphothioketal is present on Cys116. Residues 121–125 (RPIDL), Asp306, and Ile328 contribute to the UDP-N-acetyl-alpha-D-glucosamine site.

Belongs to the EPSP synthase family. MurA subfamily.

The protein resides in the cytoplasm. The enzyme catalyses phosphoenolpyruvate + UDP-N-acetyl-alpha-D-glucosamine = UDP-N-acetyl-3-O-(1-carboxyvinyl)-alpha-D-glucosamine + phosphate. The protein operates within cell wall biogenesis; peptidoglycan biosynthesis. In terms of biological role, cell wall formation. Adds enolpyruvyl to UDP-N-acetylglucosamine. The chain is UDP-N-acetylglucosamine 1-carboxyvinyltransferase 1 from Streptococcus agalactiae serotype Ia (strain ATCC 27591 / A909 / CDC SS700).